We begin with the raw amino-acid sequence, 375 residues long: Succinyl-diaminopimelate desuccinylase (375 aa).

Zn(2+) is bound at residue H66. D68 is an active-site residue. D99 serves as a coordination point for Zn(2+). Catalysis depends on E133, which acts as the Proton acceptor. Zn(2+)-binding residues include E134, E162, and H348.

Belongs to the peptidase M20A family. DapE subfamily. Homodimer. Zn(2+) is required as a cofactor. Requires Co(2+) as cofactor.

It carries out the reaction N-succinyl-(2S,6S)-2,6-diaminopimelate + H2O = (2S,6S)-2,6-diaminopimelate + succinate. The protein operates within amino-acid biosynthesis; L-lysine biosynthesis via DAP pathway; LL-2,6-diaminopimelate from (S)-tetrahydrodipicolinate (succinylase route): step 3/3. Functionally, catalyzes the hydrolysis of N-succinyl-L,L-diaminopimelic acid (SDAP), forming succinate and LL-2,6-diaminopimelate (DAP), an intermediate involved in the bacterial biosynthesis of lysine and meso-diaminopimelic acid, an essential component of bacterial cell walls. This Salmonella agona (strain SL483) protein is Succinyl-diaminopimelate desuccinylase.